A 598-amino-acid polypeptide reads, in one-letter code: Elongation factor 4 (598 aa).

The tr-type G domain maps to 2 to 184; it reads TKIRNFSIIA…AVVDRIPPPS (183 aa). GTP is bound by residues 14-19 and 131-134; these read DHGKST and NKID.

Belongs to the TRAFAC class translation factor GTPase superfamily. Classic translation factor GTPase family. LepA subfamily.

It localises to the cell inner membrane. It carries out the reaction GTP + H2O = GDP + phosphate + H(+). Required for accurate and efficient protein synthesis under certain stress conditions. May act as a fidelity factor of the translation reaction, by catalyzing a one-codon backward translocation of tRNAs on improperly translocated ribosomes. Back-translocation proceeds from a post-translocation (POST) complex to a pre-translocation (PRE) complex, thus giving elongation factor G a second chance to translocate the tRNAs correctly. Binds to ribosomes in a GTP-dependent manner. The protein is Elongation factor 4 of Syntrophobacter fumaroxidans (strain DSM 10017 / MPOB).